Consider the following 264-residue polypeptide: Thymidylate synthase (264 aa).

Residue arginine 21 coordinates dUMP. (6R)-5,10-methylene-5,6,7,8-tetrahydrofolate is bound at residue histidine 51. 126–127 is a binding site for dUMP; sequence RR. The Nucleophile role is filled by cysteine 146. Residues 166-169, asparagine 177, and 207-209 contribute to the dUMP site; these read RSAD and HLY. Aspartate 169 contacts (6R)-5,10-methylene-5,6,7,8-tetrahydrofolate. Alanine 263 provides a ligand contact to (6R)-5,10-methylene-5,6,7,8-tetrahydrofolate.

Belongs to the thymidylate synthase family. Bacterial-type ThyA subfamily. In terms of assembly, homodimer.

The protein resides in the cytoplasm. It catalyses the reaction dUMP + (6R)-5,10-methylene-5,6,7,8-tetrahydrofolate = 7,8-dihydrofolate + dTMP. It functions in the pathway pyrimidine metabolism; dTTP biosynthesis. Its function is as follows. Catalyzes the reductive methylation of 2'-deoxyuridine-5'-monophosphate (dUMP) to 2'-deoxythymidine-5'-monophosphate (dTMP) while utilizing 5,10-methylenetetrahydrofolate (mTHF) as the methyl donor and reductant in the reaction, yielding dihydrofolate (DHF) as a by-product. This enzymatic reaction provides an intracellular de novo source of dTMP, an essential precursor for DNA biosynthesis. This Cytophaga hutchinsonii (strain ATCC 33406 / DSM 1761 / CIP 103989 / NBRC 15051 / NCIMB 9469 / D465) protein is Thymidylate synthase.